A 141-amino-acid polypeptide reads, in one-letter code: Large ribosomal subunit protein uL14 (141 aa).

This sequence belongs to the universal ribosomal protein uL14 family. As to quaternary structure, part of the 50S ribosomal subunit. Forms a cluster with proteins L3 and L24e, part of which may contact the 16S rRNA in 2 intersubunit bridges.

Functionally, binds to 23S rRNA. Forms part of two intersubunit bridges in the 70S ribosome. The protein is Large ribosomal subunit protein uL14 of Thermofilum pendens (strain DSM 2475 / Hrk 5).